Consider the following 199-residue polypeptide: Lysine exporter LysE (199 aa).

A run of 5 helical transmembrane segments spans residues 6 to 26 (VVGFLACFTLIAAIGAQNAFV), 42 to 62 (LCTVSDIVLIAAGIAGFGALI), 68 to 88 (ALNVVKFGGAAFLIGYGLLAA), 144 to 164 (WLFGLGAVTASAVWFATLGFG), and 178 to 198 (WRILDGLIAVMMVALGISLTV).

Belongs to the LysE/ArgO transporter (TC 2.A.75) family.

It is found in the cell inner membrane. Catalyzes the efflux of L-lysine. In Mycobacterium bovis (strain ATCC BAA-935 / AF2122/97), this protein is Lysine exporter LysE.